The following is a 329-amino-acid chain: Cytosolic arginine sensor for mTORC1 subunit 1 (329 aa).

The residue at position 14 (S14) is a Phosphoserine. ACT domains are found at residues 72-138 and 260-321; these read AEAT…HTLA and GELW…EVLQ. L-arginine-binding positions include 111–112, G274, 280–281, and 300–304; these read SV, IV, and TFNFD.

The protein belongs to the GATS family. As to quaternary structure, forms homodimers and heterodimers with CASTOR2. Interacts with the GATOR2 complex which is composed of MIOS, SEC13, SEH1L, WDR24 and WDR59; the interaction is negatively regulated by arginine. Interacts with TM4SF5; the interaction is positively regulated by leucine and is negatively regulated by arginine. In terms of processing, phosphorylation at Ser-14 by AKT1, promoting the interaction between CASTOR1 and RNF167. Ubiquitinated by RNF167 via 'Lys-29'-polyubiquitination, leading to its degradation, releasing the GATOR2 complex. Ubiquitination by RNF167 is promoted by phosphorylation at Ser-14 by AKT1.

The protein localises to the cytoplasm. It localises to the cytosol. In terms of biological role, functions as an intracellular arginine sensor within the amino acid-sensing branch of the TORC1 signaling pathway. As a homodimer or a heterodimer with CASTOR2, binds and inhibits the GATOR subcomplex GATOR2 and thereby mTORC1. Binding of arginine to CASTOR1 allosterically disrupts the interaction of CASTOR1-containing dimers with GATOR2 which can in turn activate mTORC1 and the TORC1 signaling pathway. The chain is Cytosolic arginine sensor for mTORC1 subunit 1 from Bos taurus (Bovine).